The following is a 141-amino-acid chain: 3-hydroxyacyl-[acyl-carrier-protein] dehydratase FabZ (141 aa).

His48 is a catalytic residue.

It belongs to the thioester dehydratase family. FabZ subfamily.

It localises to the cytoplasm. It carries out the reaction a (3R)-hydroxyacyl-[ACP] = a (2E)-enoyl-[ACP] + H2O. Involved in unsaturated fatty acids biosynthesis. Catalyzes the dehydration of short chain beta-hydroxyacyl-ACPs and long chain saturated and unsaturated beta-hydroxyacyl-ACPs. This Herpetosiphon aurantiacus (strain ATCC 23779 / DSM 785 / 114-95) protein is 3-hydroxyacyl-[acyl-carrier-protein] dehydratase FabZ.